The following is a 449-amino-acid chain: Baeyer-Villiger oxidase GME11358 (449 aa).

The protein belongs to the questin oxidase family.

It participates in secondary metabolite biosynthesis. Functionally, baeyer-Villiger oxidase; part of the gene cluster that mediates the biosynthesis of dibenzodioxocinones such as pestalotiollide B, a novel class of inhibitors against cholesterol ester transfer protein (CEPT). The biosynthesis initiates from condensation of acetate and malonate units catalyzed by the non-reducing PKS pks8/GME11356. Pks8/GME11356 lacks a thioesterase (TE) domain, which is important to the cyclizing of the third ring of atrochrysone carboxylic acid, and the esterase GME11355 might play the role of TE and catalyzes the cyclization reaction of the C ring. The lactamase-like protein GME11357 (or other beta-lactamases in Pestalotiopsis microspora) probably hydrolyzes the thioester bond between the ACP of pks8/GME11356 and the intermediate to release atrochrysone carboxylic acid, which is spontaneously dehydrates to form endocrocin anthrone. Endocrocin anthrone is further converted to emodin via the endocrocin intermediate. Emodin is then oxidized by several enzymes such as the Baeyer-Villiger oxidase GME11358, the oxidoreductase GME11367, the short chain dehydrogenase/reductase GME11373, as well as by other oxidoreductases from the cluster, to modify the A and C rings and open the B ring, and finally yield monodictyphenone. The prenyltransferase GME11375 may catalyze the addition reaction between the C5 side chains and the carbon bone of dibenzodioxocinones. The remaining biochemical reactions to the final product dibenzodioxocinones should be methylation catalyzed by methyltransferase GME11366 and reduction and lactonization reaction catalyzed by a series of oxidordeuctases. This Pestalotiopsis microspora protein is Baeyer-Villiger oxidase GME11358.